The sequence spans 250 residues: ATP synthase subunit a (250 aa).

5 helical membrane-spanning segments follow: residues 27–47, 83–103, 129–149, 191–211, and 219–239; these read TDTVLSTAIAALIVLALAFYL, IAPFVLPLAVTIFVFILISNW, INYVLALALFVFVCYHAAGIW, IFAGSILVALIALFPPYIMWA, and FDLFVGAIQAFIFALLTILYF.

The protein belongs to the ATPase A chain family. As to quaternary structure, F-type ATPases have 2 components, CF(1) - the catalytic core - and CF(0) - the membrane proton channel. CF(1) has five subunits: alpha(3), beta(3), gamma(1), delta(1), epsilon(1). CF(0) has three main subunits: a(1), b(2) and c(9-12). The alpha and beta chains form an alternating ring which encloses part of the gamma chain. CF(1) is attached to CF(0) by a central stalk formed by the gamma and epsilon chains, while a peripheral stalk is formed by the delta and b chains.

The protein resides in the cell membrane. Its function is as follows. Key component of the proton channel; it plays a direct role in the translocation of protons across the membrane. The sequence is that of ATP synthase subunit a from Mycobacterium ulcerans (strain Agy99).